Reading from the N-terminus, the 161-residue chain is uncharacterized protein (161 aa).

It belongs to the M.jannaschii MJ0150/MJ0739/MJ0745/MJ1460/MJ1642 family.

This is an uncharacterized protein from Methanocaldococcus jannaschii (strain ATCC 43067 / DSM 2661 / JAL-1 / JCM 10045 / NBRC 100440) (Methanococcus jannaschii).